The following is a 388-amino-acid chain: Pregnancy-associated glycoprotein (388 aa).

The first 15 residues, 1–15, serve as a signal peptide directing secretion; sequence MKWFGVLGLVTLSEC. One can recognise a Peptidase A1 domain in the interval 74–385; it reads YMGIISVGTP…DRENDRIGLA (312 aa). D92 is an active-site residue. Disulfide bonds link C105/C110 and C266/C270. Residue D275 is part of the active site. C309 and C344 are disulfide-bonded. N356 carries an N-linked (GlcNAc...) asparagine glycan.

It belongs to the peptidase A1 family. In terms of tissue distribution, trophoblast and placental tissue.

It is found in the secreted. Its subcellular location is the extracellular space. In Equus caballus (Horse), this protein is Pregnancy-associated glycoprotein (PAG).